The sequence spans 405 residues: S-adenosylmethionine synthase (405 aa).

141 to 146 (GQGSVD) lines the ATP pocket.

Belongs to the AdoMet synthase 2 family. Mg(2+) serves as cofactor.

The enzyme catalyses L-methionine + ATP + H2O = S-adenosyl-L-methionine + phosphate + diphosphate. It participates in amino-acid biosynthesis; S-adenosyl-L-methionine biosynthesis; S-adenosyl-L-methionine from L-methionine: step 1/1. In terms of biological role, catalyzes the formation of S-adenosylmethionine from methionine and ATP. The protein is S-adenosylmethionine synthase of Methanococcus maripaludis (strain C7 / ATCC BAA-1331).